A 368-amino-acid polypeptide reads, in one-letter code: Probable endopolygalacturonase A (368 aa).

Residues 1–18 (MRSVKLFGLAALGSLGAA) form the signal peptide. The propeptide occupies 19-31 (APAPSRVSDLTKR). Cysteines 35 and 50 form a disulfide. PbH1 repeat units lie at residues 140-162 (LEDS…SVQA), 167-192 (LIDI…DISE), 193-214 (STGV…AINS), 215-235 (GENI…SIGS), 244-265 (VKNV…RIKT), 273-295 (VSQV…VIEQ), and 307-352 (TTGV…DITG). The active-site Proton donor is the Asp207. Cys209 and Cys225 are oxidised to a cystine. His229 is a catalytic residue. Residue Asn246 is glycosylated (N-linked (GlcNAc...) asparagine). Intrachain disulfides connect Cys335–Cys340 and Cys359–Cys368.

Belongs to the glycosyl hydrolase 28 family.

Its subcellular location is the secreted. It carries out the reaction (1,4-alpha-D-galacturonosyl)n+m + H2O = (1,4-alpha-D-galacturonosyl)n + (1,4-alpha-D-galacturonosyl)m.. Its function is as follows. Involved in maceration and soft-rotting of plant tissue. Hydrolyzes the 1,4-alpha glycosidic bonds of de-esterified pectate in the smooth region of the plant cell wall. In Aspergillus fumigatus (strain CBS 144.89 / FGSC A1163 / CEA10) (Neosartorya fumigata), this protein is Probable endopolygalacturonase A (pgaA).